The following is a 430-amino-acid chain: Neuropeptide FF receptor 1 (430 aa).

Residues M1–T20 form a disordered region. Residues M1–A43 lie on the Extracellular side of the membrane. Positions P9–T20 are enriched in polar residues. Residues N10, N18, and N29 are each glycosylated (N-linked (GlcNAc...) asparagine). The helical transmembrane segment at A44–V64 threads the bilayer. Topologically, residues C65–M80 are cytoplasmic. Residues F81–L101 traverse the membrane as a helical segment. Over V102–K117 the chain is Extracellular. The N-linked (GlcNAc...) asparagine glycan is linked to N113. C116 and C203 are oxidised to a cystine. Residues M118 to A138 form a helical membrane-spanning segment. The Cytoplasmic segment spans residues V139–A158. The chain crosses the membrane as a helical span at residues L159–T179. Topologically, residues L180–R214 are extracellular. N195 carries an N-linked (GlcNAc...) asparagine glycan. A helical transmembrane segment spans residues V215 to M235. At Y236 to M271 the chain is on the cytoplasmic side. The helical transmembrane segment at L272–L292 threads the bilayer. Over I293 to T307 the chain is Extracellular. A helical transmembrane segment spans residues V308–I328. At Y329 to I430 the chain is on the cytoplasmic side. The span at S379–G404 shows a compositional bias: low complexity. The interval S379–R413 is disordered.

It belongs to the G-protein coupled receptor 1 family.

It is found in the cell membrane. Functionally, receptor for NPAF (A-18-F-amide) and NPFF (F-8-F-amide) neuropeptides, also known as morphine-modulating peptides. Can also be activated by a variety of naturally occurring or synthetic FMRF-amide like ligands. This receptor mediates its action by association with G proteins that activate a phosphatidylinositol-calcium second messenger system. This chain is Neuropeptide FF receptor 1, found in Homo sapiens (Human).